The sequence spans 446 residues: Glutamate--tRNA ligase (446 aa).

The short motif at 9–19 (PSPTGLLHVGN) is the 'HIGH' region element. The 'KMSKS' region signature appears at 240–244 (GLSKR). Residue Lys-243 participates in ATP binding.

The protein belongs to the class-I aminoacyl-tRNA synthetase family. Glutamate--tRNA ligase type 1 subfamily. In terms of assembly, monomer.

It is found in the cytoplasm. The catalysed reaction is tRNA(Glu) + L-glutamate + ATP = L-glutamyl-tRNA(Glu) + AMP + diphosphate. Functionally, catalyzes the attachment of glutamate to tRNA(Glu) in a two-step reaction: glutamate is first activated by ATP to form Glu-AMP and then transferred to the acceptor end of tRNA(Glu). The polypeptide is Glutamate--tRNA ligase (Azospirillum brasilense).